The chain runs to 1360 residues: DNA-directed RNA polymerase subunit beta (1360 aa).

Belongs to the RNA polymerase beta chain family. In terms of assembly, the RNAP catalytic core consists of 2 alpha, 1 beta, 1 beta' and 1 omega subunit. When a sigma factor is associated with the core the holoenzyme is formed, which can initiate transcription.

The catalysed reaction is RNA(n) + a ribonucleoside 5'-triphosphate = RNA(n+1) + diphosphate. Functionally, DNA-dependent RNA polymerase catalyzes the transcription of DNA into RNA using the four ribonucleoside triphosphates as substrates. The polypeptide is DNA-directed RNA polymerase subunit beta (Magnetococcus marinus (strain ATCC BAA-1437 / JCM 17883 / MC-1)).